The following is a 324-amino-acid chain: NADH-ubiquinone oxidoreductase chain 1 (324 aa).

8 consecutive transmembrane segments (helical) span residues 3–23 (FILSLIGSLLLIICVLVSVAF), 77–97 (ISPIFSLFLSLFVWMCMPFFV), 104–124 (LGGLFFLCCTSLGVYTVMVAG), 150–170 (LALIMLSFIFLIGSYNMIYFF), 174–194 (IYMWFLIILFPMSLVWLTISL), 226–246 (LIFMAEYASILFMSMLFCVIF), 250–270 (DVFNLLFYVKLTFISFVFIWA), and 297–317 (YLLFFIGFKILLFSFLLWIFF).

It belongs to the complex I subunit 1 family.

It is found in the mitochondrion inner membrane. It carries out the reaction a ubiquinone + NADH + 5 H(+)(in) = a ubiquinol + NAD(+) + 4 H(+)(out). Core subunit of the mitochondrial membrane respiratory chain NADH dehydrogenase (Complex I) that is believed to belong to the minimal assembly required for catalysis. Complex I functions in the transfer of electrons from NADH to the respiratory chain. The immediate electron acceptor for the enzyme is believed to be ubiquinone. In Drosophila yakuba (Fruit fly), this protein is NADH-ubiquinone oxidoreductase chain 1 (mt:ND1).